Reading from the N-terminus, the 257-residue chain is Lipid A 4'-phosphatase (257 aa).

6 consecutive transmembrane segments (helical) span residues 21–41, 85–105, 119–139, 174–194, 201–221, and 225–245; these read FGAF…FRAF, IFFR…IECY, KLKV…NVIL, CSFV…LLFV, ALVP…LSFG, and LSDV…LLAL.

Belongs to the lipid A LpxF 4'-phosphatase family.

It is found in the cell inner membrane. It participates in bacterial outer membrane biogenesis; LPS lipid A biosynthesis. Probably removes the 4'-phosphate moiety from lipid A species. Not seen to act on other membrane components, nor does it dephosphorylate the 1-phosphate group of lipid A and/or lipid A precursors. The chain is Lipid A 4'-phosphatase from Rhizobium etli (strain ATCC 51251 / DSM 11541 / JCM 21823 / NBRC 15573 / CFN 42).